The following is a 242-amino-acid chain: Biosynthetic peptidoglycan transglycosylase (242 aa).

A helical membrane pass occupies residues 19–39 (ILAALAVFWGGGIALFSVVPV).

It belongs to the glycosyltransferase 51 family.

It is found in the cell inner membrane. The enzyme catalyses [GlcNAc-(1-&gt;4)-Mur2Ac(oyl-L-Ala-gamma-D-Glu-L-Lys-D-Ala-D-Ala)](n)-di-trans,octa-cis-undecaprenyl diphosphate + beta-D-GlcNAc-(1-&gt;4)-Mur2Ac(oyl-L-Ala-gamma-D-Glu-L-Lys-D-Ala-D-Ala)-di-trans,octa-cis-undecaprenyl diphosphate = [GlcNAc-(1-&gt;4)-Mur2Ac(oyl-L-Ala-gamma-D-Glu-L-Lys-D-Ala-D-Ala)](n+1)-di-trans,octa-cis-undecaprenyl diphosphate + di-trans,octa-cis-undecaprenyl diphosphate + H(+). The protein operates within cell wall biogenesis; peptidoglycan biosynthesis. Functionally, peptidoglycan polymerase that catalyzes glycan chain elongation from lipid-linked precursors. The sequence is that of Biosynthetic peptidoglycan transglycosylase from Salmonella choleraesuis (strain SC-B67).